The primary structure comprises 278 residues: Protein mtd-1 (278 aa).

Residues 1–17 (MRSSLLLLVFFLSIGWA) form the signal peptide. Over 18–254 (RYCVHNEKSW…EMLEEIEARK (237 aa)) the chain is Extracellular. Residues Asn-40, Asn-73, Asn-163, and Asn-190 are each glycosylated (N-linked (GlcNAc...) asparagine). Residues 255–271 (VPVDSSAPVNIILSIAF) form a helical membrane-spanning segment. The Cytoplasmic segment spans residues 272-278 (SIFLIHF).

The protein localises to the cell membrane. Functionally, plays a role in mechanosensory transduction (touch sensitivity). The sequence is that of Protein mtd-1 from Caenorhabditis elegans.